We begin with the raw amino-acid sequence, 486 residues long: Fructose dehydrogenase cytochrome subunit (486 aa).

Positions 1–25 (MRYFRPLSATAMTTVLLLAGTNVRA) are cleaved as a signal peptide. Cytochrome c domains lie at 38–142 (PSIS…MTEV), 186–294 (DDWN…RSVP), and 330–423 (TKTT…LSHF). Heme c-binding residues include cysteine 52, cysteine 55, histidine 56, cysteine 201, cysteine 204, histidine 205, cysteine 343, cysteine 346, and histidine 347. A helical membrane pass occupies residues 458-478 (LLGTGGILGAILVVAGLWWLI).

Heterotrimer composed of FdhL, FdhS and FdhC. In terms of processing, binds 3 heme c groups covalently per subunit.

The protein resides in the cell membrane. Cytochrome subunit of fructose dehydrogenase, an enzyme that catalyzes the oxidation of D-fructose to produce 5-keto-D-fructose. In the complex, mediates both the electron transfer to ubiquinone and the anchoring of the complex to the membrane. The protein is Fructose dehydrogenase cytochrome subunit (fdhC) of Gluconobacter japonicus.